Reading from the N-terminus, the 298-residue chain is Fluorinase (298 aa).

S-adenosyl-L-methionine is bound by residues Asp14, Asp19–Ser21, Tyr75, Ser156, Asp209, Asn214, Ser268–Arg269, and Arg276–Ala278.

It belongs to the SAM hydrolase / SAM-dependent halogenase family.

The catalysed reaction is fluoride + S-adenosyl-L-methionine = 5'-deoxy-5'-fluoroadenosine + L-methionine. Functionally, catalyzes the formation of a C-F bond by combining S-adenosyl-L-methionine (SAM) and fluoride to generate 5'-fluoro-5'-deoxyadenosine (5'-FDA) and L-methionine. The sequence is that of Fluorinase from Actinoplanes sp. (strain N902-109).